Consider the following 964-residue polypeptide: Cycloisomaltooligosaccharide glucanotransferase (964 aa).

Positions 1–30 (MRVKILPLVFMTLLLIVPSQMLLPSGQANA) are cleaved as a signal peptide. 2 CBM6 domains span residues 413–538 (DRYE…LTLG) and 740–863 (NMYE…LKLD).

This sequence belongs to the glycosyl hydrolase 66 family.

The catalysed reaction is cyclizes part of a (1-&gt;6)-alpha-D-glucan chain by formation of a (1-&gt;6)-alpha-D-glucosidic bond.. Functionally, produces cycloisomaltooligosaccharide from dextran. The polypeptide is Cycloisomaltooligosaccharide glucanotransferase (cit) (Niallia circulans (Bacillus circulans)).